The chain runs to 208 residues: Small ribosomal subunit protein uS4 (208 aa).

The S4 RNA-binding domain maps to 98–158; it reads RRLDNVVYRL…EKNRKISVVA (61 aa).

The protein belongs to the universal ribosomal protein uS4 family. As to quaternary structure, part of the 30S ribosomal subunit. Contacts protein S5. The interaction surface between S4 and S5 is involved in control of translational fidelity.

One of the primary rRNA binding proteins, it binds directly to 16S rRNA where it nucleates assembly of the body of the 30S subunit. In terms of biological role, with S5 and S12 plays an important role in translational accuracy. The protein is Small ribosomal subunit protein uS4 of Lawsonia intracellularis (strain PHE/MN1-00).